Consider the following 325-residue polypeptide: LIM and senescent cell antigen-like-containing domain protein 1 (325 aa).

Ala-2 bears the N-acetylalanine mark. LIM zinc-binding domains lie at 10–62, 71–121, 135–184, 193–243, and 252–303; these read CERC…CEHD, CHQC…CRPC, CQKC…CLPC, CGAC…CETH, and CFHC…CKKC.

As to quaternary structure, component of the heterotrimeric IPP (ILK-PINCH-PARVIN) complex composed of ILK, LIMS1/PINCH and PARVA; the complex binds to F-actin via the C-terminal tail of LIMS1 and the N-terminal region of PARVA, promoting F-actin filament bundling. Formation of the IPP complex is dependent on protein kinase C and precedes integrin-mediated cell adhesion and spreading. Competes with LIMS2 for interaction with ILK. Interacts with SH3/SH2 adapter NCK2, thereby linking the complex to cell surface receptors. Interacts (via LIM zinc-binding 5) with TGFB1I1.

It localises to the cell junction. It is found in the focal adhesion. The protein localises to the cell membrane. Within the IPP (ILK-PINCH-PARVIN) complex, binds to F-actin, promoting F-actin bundling, a process required to generate force for actin cytoskeleton reorganization and subsequent dynamic cell adhesion events such as cell spreading and migration. In Mus musculus (Mouse), this protein is LIM and senescent cell antigen-like-containing domain protein 1 (Lims1).